A 100-amino-acid chain; its full sequence is Small ribosomal subunit protein uS14c (100 aa).

This sequence belongs to the universal ribosomal protein uS14 family. Part of the 30S ribosomal subunit.

The protein localises to the plastid. The protein resides in the chloroplast. Functionally, binds 16S rRNA, required for the assembly of 30S particles. The sequence is that of Small ribosomal subunit protein uS14c from Cyanidium caldarium (Red alga).